The primary structure comprises 326 residues: Adenosine receptor A1 (326 aa).

The Extracellular portion of the chain corresponds to 1–10 (MPPAISAFQA). A helical transmembrane segment spans residues 11 to 33 (AYIGIEVLIALVSVPGNVLVIWA). The Cytoplasmic segment spans residues 34–46 (VKVNQALRDATFC). A helical transmembrane segment spans residues 47–69 (FIVSLAVADVAVGALVIPLAILI). At 70 to 80 (NIGPRTYFHTC) the chain is on the extracellular side. C80 and C169 are disulfide-bonded. The chain crosses the membrane as a helical span at residues 81–102 (LMVACPVLILTQSSILALLAIA). The Cytoplasmic portion of the chain corresponds to 103 to 123 (VDRYLRVKIPLRYKTVVTPRR). The helical transmembrane segment at 124–146 (AAVAIAGCWILSFVVGLTPLFGW) threads the bilayer. The Extracellular portion of the chain corresponds to 147–176 (NRLGEAQRAWAANGSGGEPVIKCEFEKVIS). N159 is a glycosylation site (N-linked (GlcNAc...) asparagine). Residues 177–201 (MEYMVYFNFFVWVLPPLLLMVLIYL) form a helical membrane-spanning segment. Over 202 to 235 (EVFYLIRRQLGKKVSASSGDPQKYYGKELKIAKS) the chain is Cytoplasmic. A helical membrane pass occupies residues 236–259 (LALILFLFALSWLPLHILNCITLF). Residues 260–267 (CPSCRKPS) lie on the Extracellular side of the membrane. The chain crosses the membrane as a helical span at residues 268 to 292 (ILMYIAIFLTHGNSAMNPIVYAFRI). Over 293 to 326 (QKFRVTFLKIWNDHFRCQPTPPVDEDPPEEAPHD) the chain is Cytoplasmic. C309 carries S-palmitoyl cysteine lipidation.

It belongs to the G-protein coupled receptor 1 family.

Its subcellular location is the cell membrane. Functionally, receptor for adenosine. The activity of this receptor is mediated by G proteins which inhibit adenylyl cyclase. This chain is Adenosine receptor A1 (ADORA1), found in Canis lupus familiaris (Dog).